Reading from the N-terminus, the 530-residue chain is Hyccin 2 (530 aa).

A phosphothreonine mark is found at T30 and T306. 2 positions are modified to phosphoserine: S321 and S341. The disordered stretch occupies residues 328–404; sequence RREGAEGLNG…SNESPRDSVV (77 aa). Residues 353–373 are compositionally biased toward polar residues; the sequence is SGASLSSQPHGTKPPSSSQRG. 4 positions are modified to phosphoserine: S430, S442, S444, and S491. The segment at 502–530 is disordered; the sequence is EGKELLSPGAPLTKQSRSPSFNMQLISQV. Residues 514–530 show a composition bias toward polar residues; the sequence is TKQSRSPSFNMQLISQV.

This sequence belongs to the Hyccin family. As to quaternary structure, component of a phosphatidylinositol 4-kinase (PI4K) complex, composed of PI4KA, EFR3 (EFR3A or EFR3B), TTC7 (TTC7A or TTC7B) and HYCC (HYCC1 or HYCC2). As to expression, expressed in the central nervous system. Expressed at much lower level in oligodendrocytes than in neurons.

The protein localises to the cytoplasm. The protein resides in the cytosol. Its subcellular location is the cell membrane. Its function is as follows. Component of a complex required to localize phosphatidylinositol 4-kinase (PI4K) to the plasma membrane. The sequence is that of Hyccin 2 (Hycc2) from Mus musculus (Mouse).